The sequence spans 418 residues: Putative FBD-associated F-box protein At5g56560 (418 aa).

Residues 4–60 enclose the F-box domain; the sequence is QTRLSDLPDELLLKILSALPMFKVTLATRLISRRWKGPWKLVPDVTFDDDDIPFKSF. Residues 340–390 enclose the FBD domain; that stretch reads LWEEPAVVAKCLSEHLEIFEWRQYEGTEQERNVAGYILANATCLKMATFST.

The protein is Putative FBD-associated F-box protein At5g56560 of Arabidopsis thaliana (Mouse-ear cress).